The chain runs to 347 residues: Ribosomal RNA small subunit methyltransferase H (347 aa).

S-adenosyl-L-methionine-binding positions include 50–52, aspartate 69, phenylalanine 96, aspartate 125, and glutamine 132; that span reads GGH.

It belongs to the methyltransferase superfamily. RsmH family.

It is found in the cytoplasm. It catalyses the reaction cytidine(1402) in 16S rRNA + S-adenosyl-L-methionine = N(4)-methylcytidine(1402) in 16S rRNA + S-adenosyl-L-homocysteine + H(+). Specifically methylates the N4 position of cytidine in position 1402 (C1402) of 16S rRNA. This Corynebacterium aurimucosum (strain ATCC 700975 / DSM 44827 / CIP 107346 / CN-1) (Corynebacterium nigricans) protein is Ribosomal RNA small subunit methyltransferase H.